The following is a 339-amino-acid chain: Annexin A2 (339 aa).

Residue Ser-2 is modified to N-acetylserine. The S100A10-binding site stretch occupies residues 2-24 (STVHEILCKLSLEGDHSTPPSAY). Residue Tyr-24 is modified to Phosphotyrosine; by SRC. Ser-26 is modified (phosphoserine; by PKC). Annexin repeat units lie at residues 33 to 104 (FDAE…GLLK) and 105 to 176 (TPAQ…ALAK). An N6-acetyllysine; alternate modification is found at Lys-49. Lys-49 participates in a covalent cross-link: Glycyl lysine isopeptide (Lys-Gly) (interchain with G-Cter in SUMO1); alternate. Residue Lys-49 forms a Glycyl lysine isopeptide (Lys-Gly) (interchain with G-Cter in SUMO2); alternate linkage. Lys-152 is modified (N6-acetyllysine). Ser-184 carries the post-translational modification Phosphoserine. 2 Annexin repeats span residues 189–261 (ELID…NLVQ) and 265–336 (NKPL…YLCG). Tyr-199 is modified (phosphotyrosine). At Lys-227 the chain carries N6-acetyllysine.

This sequence belongs to the annexin family. As to quaternary structure, heterotetramer containing 2 light chains of S100A10/p11 and 2 heavy chains of ANXA2/p36. Interacts with ATP1B1. Interacts with DYSF. Interacts with COCH. Interacts (via repeat Annexin 1) with PCSK9 (via the C-terminal domain); the interaction inhibits the degradation of LDLR. Interacts with CEACAM1 (via the cytoplasmic domain); this interaction is regulated by phosphorylation of CEACAM1. Interacts with APPL2 and APPL1; targets APPL2 to endosomes and acting in parallel to RAB5A. Interacts with S100A4. May interact with UBAP2. Interacts with PLEKHG4B; this interaction is required for PLEKHG4B localization to cell-cell adhesions. Post-translationally, ISGylated.

The protein resides in the secreted. It is found in the extracellular space. Its subcellular location is the extracellular matrix. The protein localises to the basement membrane. It localises to the melanosome. Functionally, calcium-regulated membrane-binding protein whose affinity for calcium is greatly enhanced by anionic phospholipids. It binds two calcium ions with high affinity. May be involved in heat-stress response. Inhibits PCSK9-enhanced LDLR degradation, probably reduces PCSK9 protein levels via a translational mechanism but also competes with LDLR for binding with PCSK9. Binds to endosomes damaged by phagocytosis of particulate wear debris and participates in endosomal membrane stabilization, thereby limiting NLRP3 inflammasome activation. Required for endothelial cell surface plasmin generation and may support fibrinolytic surveillance and neoangiogenesis. This chain is Annexin A2 (ANXA2), found in Bos taurus (Bovine).